Here is a 469-residue protein sequence, read N- to C-terminus: Glutamate--tRNA ligase 2 (469 aa).

Positions 10–20 match the 'HIGH' region motif; that stretch reads PSPTGFLHIGS. The short motif at 239–243 is the 'KMSKS' region element; sequence KLSKR. Lysine 242 contacts ATP.

Belongs to the class-I aminoacyl-tRNA synthetase family. Glutamate--tRNA ligase type 1 subfamily. In terms of assembly, monomer.

Its subcellular location is the cytoplasm. The catalysed reaction is tRNA(Glu) + L-glutamate + ATP = L-glutamyl-tRNA(Glu) + AMP + diphosphate. Its function is as follows. Catalyzes the attachment of glutamate to tRNA(Glu) in a two-step reaction: glutamate is first activated by ATP to form Glu-AMP and then transferred to the acceptor end of tRNA(Glu). This is Glutamate--tRNA ligase 2 from Rickettsia typhi (strain ATCC VR-144 / Wilmington).